Consider the following 439-residue polypeptide: Glutamine synthetase (439 aa).

The region spanning 12–93 is the GS beta-grasp domain; sequence SKIKFVQLVF…VYGFIYKDNK (82 aa). The GS catalytic domain occupies 99–439; sequence PRGILKRALE…EWELERYFFL (341 aa). Mg(2+) contacts are provided by Glu-122 and Glu-124. An ATP-binding site is contributed by Glu-172. Mg(2+) contacts are provided by Glu-177 and Glu-184. Residue Gly-229 coordinates L-glutamate. His-233 contacts Mg(2+). Residues 235–237 and Ser-237 contribute to the ATP site; that span reads HIS. Positions 283, 289, and 301 each coordinate L-glutamate. ATP is bound by residues Arg-301, Arg-306, and Lys-313. Glu-318 provides a ligand contact to Mg(2+). Arg-320 provides a ligand contact to L-glutamate.

Belongs to the glutamine synthetase family. Oligomer of 12 subunits arranged in the form of two hexagons. It depends on Mg(2+) as a cofactor.

The protein localises to the cytoplasm. The enzyme catalyses L-glutamate + NH4(+) + ATP = L-glutamine + ADP + phosphate + H(+). Functionally, probably involved in nitrogen metabolism via ammonium assimilation. Catalyzes the ATP-dependent biosynthesis of glutamine from glutamate and ammonia. This is Glutamine synthetase from Pyrococcus furiosus (strain ATCC 43587 / DSM 3638 / JCM 8422 / Vc1).